The following is a 190-amino-acid chain: MDIKIDISISGDKFTVTTRRENEERKKYLPLQKEKTTDVIKPDYLEYDDLLDRDEMSTILEEYFMYRGLLGLRIKYGRLFNEIKKFDNDAEEQFGTIEELKQKLRLNSEEGADNFIDYIKVQKQDIVKLTVYDCISMIGLCACVVDVWRNEKLFSRWKYCLRAIKLFINDHMLDKIKSILQNRLVYVEMS.

It belongs to the orthopoxvirus A52R protein family. As to quaternary structure, interacts with host TRAF6 and IRAK2.

In terms of biological role, bcl-2-like protein which targets host toll-like receptor signaling complexes to suppress innate immune response. Interacts with host TRAF6 to activate p38 and subsequently induce the expression of several cytokines such as IL-10. Also associates with host IRAK2 to inhibit NF-kappa-B signaling. This Homo sapiens (Human) protein is Protein A52.